We begin with the raw amino-acid sequence, 599 residues long: Serine/threonine-protein kinase Nek1 (599 aa).

Residues 4 to 258 (YEVLEQIGKG…AAELLKHPHL (255 aa)) form the Protein kinase domain. Residues 10-18 (IGKGAFGSA) and Lys-33 contribute to the ATP site. The active-site Proton acceptor is the Asp-129. Disordered stretches follow at residues 364 to 386 (SIVK…EPPK), 461 to 482 (SEDP…PQHC), and 504 to 542 (DDDD…DTSS). The segment covering 511–530 (DSSSGRNNAAAAASSRAGSS) has biased composition (low complexity).

This sequence belongs to the protein kinase superfamily. NEK Ser/Thr protein kinase family. NIMA subfamily. In terms of tissue distribution, expressed in anthers, pistils and leaves.

It catalyses the reaction L-seryl-[protein] + ATP = O-phospho-L-seryl-[protein] + ADP + H(+). The catalysed reaction is L-threonyl-[protein] + ATP = O-phospho-L-threonyl-[protein] + ADP + H(+). Its function is as follows. May be involved in plant development processes. The polypeptide is Serine/threonine-protein kinase Nek1 (Oryza sativa subsp. japonica (Rice)).